The chain runs to 155 residues: Protein-export protein SecB (155 aa).

The protein belongs to the SecB family. As to quaternary structure, homotetramer, a dimer of dimers. One homotetramer interacts with 1 SecA dimer.

It localises to the cytoplasm. Functionally, one of the proteins required for the normal export of preproteins out of the cell cytoplasm. It is a molecular chaperone that binds to a subset of precursor proteins, maintaining them in a translocation-competent state. It also specifically binds to its receptor SecA. The polypeptide is Protein-export protein SecB (Albidiferax ferrireducens (strain ATCC BAA-621 / DSM 15236 / T118) (Rhodoferax ferrireducens)).